The chain runs to 515 residues: Bifunctional solanapyrone synthase (515 aa).

An N-terminal signal peptide occupies residues 1 to 25 (MRLIILNLLSLGITPSVVGHSGPHR). N-linked (GlcNAc...) asparagine glycosylation occurs at Asn-66. The FAD-binding PCMH-type domain occupies 91 to 261 (APKNPACIYT…THIVQRTYPL (171 aa)). Residue His-128 is modified to Pros-8alpha-FAD histidine. N-linked (GlcNAc...) asparagine glycosylation is found at Asn-274 and Asn-355.

Belongs to the oxygen-dependent FAD-linked oxidoreductase family. The cofactor is FAD.

It catalyses the reaction prosolanapyrone II + O2 = prosolanapyrone III + H2O2. It carries out the reaction prosolanapyrone III = (-)-solanapyrone A. The enzyme catalyses prosolanapyrone III = solanapyrone D. Its pathway is phytotoxin biosynthesis. In terms of biological role, bifunctional solanapyrone synthase; part of the gene cluster that mediates the biosynthesis of the phytotoxin solanapyrone, a causal agent of early blight disease of potato and tomato. The prosolanapyrone synthase sol1 is a polyketide synthase that produces the octaketide desmethylprosolanapyrone I via sequential condensations of 7 malonyl-CoA units with one acetyl-CoA unit, and one methylation step. The octaketide backbone is further methylated by the sol2 O-methyltransferase to yield prosolanapyrone I. Prosolanapyrone I is hydroxylated to prosolanapyrone II by the cytochrome P450 monooxygenase sol6. The solanapyrone synthase sol5 then catalyzes the oxidation of prosolanapyrone II and the subsequent Diels Alder cycloisomerization of the product prosolanapyrone III to solanapyrones A and D. Solanapyrones A and D are then converted into solanapyrones B and E, respectively, by the sol3 dehydrogenase. The sequence is that of Bifunctional solanapyrone synthase (sol5) from Alternaria solani.